A 595-amino-acid polypeptide reads, in one-letter code: Elongation factor 4 (595 aa).

The tr-type G domain maps to 2 to 184 (ETIRNFSIIA…TITHNIPYPK (183 aa)). Residues 14–19 (DHGKST) and 131–134 (NKID) contribute to the GTP site.

This sequence belongs to the TRAFAC class translation factor GTPase superfamily. Classic translation factor GTPase family. LepA subfamily.

The protein resides in the cell membrane. It carries out the reaction GTP + H2O = GDP + phosphate + H(+). In terms of biological role, required for accurate and efficient protein synthesis under certain stress conditions. May act as a fidelity factor of the translation reaction, by catalyzing a one-codon backward translocation of tRNAs on improperly translocated ribosomes. Back-translocation proceeds from a post-translocation (POST) complex to a pre-translocation (PRE) complex, thus giving elongation factor G a second chance to translocate the tRNAs correctly. Binds to ribosomes in a GTP-dependent manner. This is Elongation factor 4 from Buchnera aphidicola subsp. Baizongia pistaciae (strain Bp).